The primary structure comprises 149 residues: Arginine repressor (149 aa).

This sequence belongs to the ArgR family.

It is found in the cytoplasm. It functions in the pathway amino-acid biosynthesis; L-arginine biosynthesis [regulation]. Regulates arginine biosynthesis genes. This Shouchella clausii (strain KSM-K16) (Alkalihalobacillus clausii) protein is Arginine repressor.